We begin with the raw amino-acid sequence, 139 residues long: Large ribosomal subunit protein uL22c (139 aa).

It belongs to the universal ribosomal protein uL22 family. As to quaternary structure, part of the 50S ribosomal subunit.

It is found in the plastid. The protein resides in the chloroplast. In terms of biological role, this protein binds specifically to 23S rRNA. Its function is as follows. The globular domain of the protein is located near the polypeptide exit tunnel on the outside of the subunit, while an extended beta-hairpin is found that lines the wall of the exit tunnel in the center of the 70S ribosome. In Cycas taitungensis (Prince sago), this protein is Large ribosomal subunit protein uL22c (rpl22).